Consider the following 450-residue polypeptide: MSNSDLELSNAASPPPVELDNSQVDEIINNVRCVAIPWQGYQRSGSLEENELQEIENLTGKPLSAYVKTAEEDTTAYSNLFLKLLSMKDTPDVVNFALVKLADTLLNSNKFLSAFGPAFYDFLEKDESYINYLDDDSKLLFARVFALCSSSSPCSVAKAFTLFLEYLGKLMQSLNPLTRLFAVQCLNGVLTLKAHRYALWAENTCSFRLAELLRNSIGDTQLQYYSLFCFWQLTFESHIAQDINKRFDLIKLLVQIIRSDTKTKVYRLVLAILVNLIDKAPKDTISTMLLEHVDKAVQLLQKRKWADEDITNYLDFITSTLDESSKHLSTFDMYKSELDTGILHWSPSHRSEDFWHQNAKRLNEDNYALLKKLFHIVQYNEDNTSLAVACHDLGAYIRSYPEGRSLIIKYGAKQRIMDLMSHPDPEVRFEALSTVQLLMTEVCFLSKITL.

The protein belongs to the V-ATPase H subunit family. In terms of assembly, V-ATPase is a heteromultimeric enzyme composed of a peripheral catalytic V1 complex (components A to H) attached to an integral membrane V0 proton pore complex (components: a, c, c', c'', d, e, f and VOA1).

The protein resides in the vacuole membrane. Functionally, subunit of the V1 complex of vacuolar(H+)-ATPase (V-ATPase), a multisubunit enzyme composed of a peripheral complex (V1) that hydrolyzes ATP and a membrane integral complex (V0) that translocates protons. V-ATPase is responsible for acidifying and maintaining the pH of intracellular compartments. This subunit is essential for activity, but not assembly, of the enzyme complex. This subunit is also required for silencing the ATPase activity of V-ATPase when V1 is detached from V0. This is V-type proton ATPase subunit H (vma13) from Schizosaccharomyces pombe (strain 972 / ATCC 24843) (Fission yeast).